Here is a 222-residue protein sequence, read N- to C-terminus: UPF0758 protein YicR (222 aa).

The region spanning 100-222 is the MPN domain; the sequence is PLLSPEMTRE…YVSFAERGWI (123 aa). Zn(2+)-binding residues include histidine 171, histidine 173, and aspartate 184. The short motif at 171–184 is the JAMM motif element; it reads HNHPSGCAEPSKAD.

Belongs to the UPF0758 family. YicR subfamily.

The chain is UPF0758 protein YicR from Escherichia coli O81 (strain ED1a).